The sequence spans 146 residues: Large ribosomal subunit protein bL19 (146 aa).

The segment at 119–146 (DYRKKGEKGVEKVETTPVSADIETQVAE) is disordered.

It belongs to the bacterial ribosomal protein bL19 family.

In terms of biological role, this protein is located at the 30S-50S ribosomal subunit interface and may play a role in the structure and function of the aminoacyl-tRNA binding site. This is Large ribosomal subunit protein bL19 from Bartonella tribocorum (strain CIP 105476 / IBS 506).